A 283-amino-acid polypeptide reads, in one-letter code: 4-diphosphocytidyl-2-C-methyl-D-erythritol kinase (283 aa).

The active site involves Lys-8. An ATP-binding site is contributed by 90–100; sequence PIGSGLAGGSS. Asp-132 is an active-site residue.

Belongs to the GHMP kinase family. IspE subfamily.

The enzyme catalyses 4-CDP-2-C-methyl-D-erythritol + ATP = 4-CDP-2-C-methyl-D-erythritol 2-phosphate + ADP + H(+). It functions in the pathway isoprenoid biosynthesis; isopentenyl diphosphate biosynthesis via DXP pathway; isopentenyl diphosphate from 1-deoxy-D-xylulose 5-phosphate: step 3/6. In terms of biological role, catalyzes the phosphorylation of the position 2 hydroxy group of 4-diphosphocytidyl-2C-methyl-D-erythritol. The protein is 4-diphosphocytidyl-2-C-methyl-D-erythritol kinase of Chlamydia muridarum (strain MoPn / Nigg).